The following is a 90-amino-acid chain: Large ribosomal subunit protein eL31 (90 aa).

The protein belongs to the eukaryotic ribosomal protein eL31 family.

The protein is Large ribosomal subunit protein eL31 of Natronomonas pharaonis (strain ATCC 35678 / DSM 2160 / CIP 103997 / JCM 8858 / NBRC 14720 / NCIMB 2260 / Gabara) (Halobacterium pharaonis).